Here is a 132-residue protein sequence, read N- to C-terminus: Small ribosomal subunit protein uS12 (132 aa).

Asp89 carries the post-translational modification 3-methylthioaspartic acid. Residues 106 to 132 (GVKDRKKSRSKYGTKKPKEAAKTAAKK) are disordered. The segment covering 109-120 (DRKKSRSKYGTK) has biased composition (basic residues).

Belongs to the universal ribosomal protein uS12 family. Part of the 30S ribosomal subunit. Contacts proteins S8 and S17. May interact with IF1 in the 30S initiation complex.

Its function is as follows. With S4 and S5 plays an important role in translational accuracy. Interacts with and stabilizes bases of the 16S rRNA that are involved in tRNA selection in the A site and with the mRNA backbone. Located at the interface of the 30S and 50S subunits, it traverses the body of the 30S subunit contacting proteins on the other side and probably holding the rRNA structure together. The combined cluster of proteins S8, S12 and S17 appears to hold together the shoulder and platform of the 30S subunit. This chain is Small ribosomal subunit protein uS12 (rpsL), found in Thermus thermophilus (strain ATCC BAA-163 / DSM 7039 / HB27).